The sequence spans 166 residues: Bacterial non-heme ferritin (166 aa).

Positions 2–145 (LSKDLLEALN…THIDYLNRIG (144 aa)) constitute a Ferritin-like diiron domain. 5 residues coordinate Fe cation: Glu17, Glu50, His53, Glu94, and Gln127.

This sequence belongs to the ferritin family. Prokaryotic subfamily.

It localises to the cytoplasm. It carries out the reaction 4 Fe(2+) + O2 + 6 H2O = 4 iron(III) oxide-hydroxide + 12 H(+). Iron-storage protein. The sequence is that of Bacterial non-heme ferritin (ftnA) from Staphylococcus haemolyticus (strain JCSC1435).